The chain runs to 479 residues: Glutamyl-tRNA(Gln) amidotransferase subunit A (479 aa).

Active-site charge relay system residues include Lys-74 and Ser-149. The Acyl-ester intermediate role is filled by Ser-173.

This sequence belongs to the amidase family. GatA subfamily. In terms of assembly, heterotrimer of A, B and C subunits.

The catalysed reaction is L-glutamyl-tRNA(Gln) + L-glutamine + ATP + H2O = L-glutaminyl-tRNA(Gln) + L-glutamate + ADP + phosphate + H(+). Functionally, allows the formation of correctly charged Gln-tRNA(Gln) through the transamidation of misacylated Glu-tRNA(Gln) in organisms which lack glutaminyl-tRNA synthetase. The reaction takes place in the presence of glutamine and ATP through an activated gamma-phospho-Glu-tRNA(Gln). The protein is Glutamyl-tRNA(Gln) amidotransferase subunit A of Cenarchaeum symbiosum (strain A).